We begin with the raw amino-acid sequence, 122 residues long: Small ribosomal subunit protein uS13 (122 aa).

The segment at 95–122 (GLPVRGQRTHTNARTRKGPAKPIAGKKK) is disordered.

This sequence belongs to the universal ribosomal protein uS13 family. As to quaternary structure, part of the 30S ribosomal subunit. Forms a loose heterodimer with protein S19. Forms two bridges to the 50S subunit in the 70S ribosome.

Functionally, located at the top of the head of the 30S subunit, it contacts several helices of the 16S rRNA. In the 70S ribosome it contacts the 23S rRNA (bridge B1a) and protein L5 of the 50S subunit (bridge B1b), connecting the 2 subunits; these bridges are implicated in subunit movement. Contacts the tRNAs in the A and P-sites. This chain is Small ribosomal subunit protein uS13, found in Xanthobacter autotrophicus (strain ATCC BAA-1158 / Py2).